The primary structure comprises 123 residues: uncharacterized protein (123 aa).

The helical transmembrane segment at 5 to 25 (GTLVIIFAIVLILCIMLLFFY) threads the bilayer. Residues 32–53 (KPSVLPPPIPPPTPPPSKKKYD) are disordered. A compositionally biased stretch (pro residues) spans 35–47 (VLPPPIPPPTPPP).

This sequence belongs to the asfivirus CP123L family.

The protein localises to the host membrane. The protein resides in the virion. This is an uncharacterized protein from Ornithodoros (relapsing fever ticks).